The primary structure comprises 413 residues: Chloramphenicol efflux pump Rv0191 (413 aa).

12 helical membrane passes run 23–43 (LSVL…PVGA), 55–75 (VVLV…TTVP), 89–109 (LVVS…APNF), 110–130 (AVLA…WAVI), 150–170 (IYIG…AMSL), 176–196 (LAAV…RLAL), 226–246 (VLTM…VVII), 256–276 (NLAW…PLVA), 286–306 (AVIV…ALAF), 312–332 (AATA…ATAV), 353–373 (GLYV…GGLL), and 378–398 (LAMM…GMTV).

It belongs to the major facilitator superfamily.

Its subcellular location is the cell membrane. With respect to regulation, inhibited by the drug efflux pump inhibitors verapamil, resperine, piperine, chlorpromazine and carbonyl cyanide m-chlorophenylhydrazone (CCCP). Functionally, active efflux pump that plays an important role in chloramphenicol resistance. Overexpression causes pyrazinamide resistance. This is Chloramphenicol efflux pump Rv0191 from Mycobacterium tuberculosis (strain ATCC 25618 / H37Rv).